Consider the following 236-residue polypeptide: Purine nucleoside phosphorylase DeoD-type (236 aa).

H4 provides a ligand contact to a purine D-ribonucleoside. Residues G20, R24, R43, and 87–90 contribute to the phosphate site; that span reads RVGT. A purine D-ribonucleoside contacts are provided by residues 178 to 180 and 202 to 203; these read EME and SD. Residue D203 is the Proton donor of the active site.

Belongs to the PNP/UDP phosphorylase family. Homohexamer; trimer of homodimers.

The catalysed reaction is a purine D-ribonucleoside + phosphate = a purine nucleobase + alpha-D-ribose 1-phosphate. The enzyme catalyses a purine 2'-deoxy-D-ribonucleoside + phosphate = a purine nucleobase + 2-deoxy-alpha-D-ribose 1-phosphate. Its function is as follows. Catalyzes the reversible phosphorolytic breakdown of the N-glycosidic bond in the beta-(deoxy)ribonucleoside molecules, with the formation of the corresponding free purine bases and pentose-1-phosphate. This is Purine nucleoside phosphorylase DeoD-type from Geobacillus kaustophilus (strain HTA426).